A 526-amino-acid chain; its full sequence is Glucose-6-phosphate isomerase (526 aa).

Catalysis depends on Glu-323, which acts as the Proton donor. Residues His-352 and Lys-454 contribute to the active site.

It belongs to the GPI family.

The protein localises to the cytoplasm. It catalyses the reaction alpha-D-glucose 6-phosphate = beta-D-fructose 6-phosphate. It participates in carbohydrate biosynthesis; gluconeogenesis. The protein operates within carbohydrate degradation; glycolysis; D-glyceraldehyde 3-phosphate and glycerone phosphate from D-glucose: step 2/4. Functionally, catalyzes the reversible isomerization of glucose-6-phosphate to fructose-6-phosphate. The protein is Glucose-6-phosphate isomerase of Prochlorococcus marinus subsp. pastoris (strain CCMP1986 / NIES-2087 / MED4).